The chain runs to 100 residues: MARKSLIQRERKRKKLEQKYHWIRRSSKTEINKVPSLSDKWEIHGKLQSPPRNSAPIRLHRRCFSTGRPRANYRDFGLSGHILREMVHACLLPGATRSSW.

This sequence belongs to the universal ribosomal protein uS14 family. In terms of assembly, part of the 30S ribosomal subunit.

The protein resides in the plastid. Its subcellular location is the chloroplast. Its function is as follows. Binds 16S rRNA, required for the assembly of 30S particles. In Chloranthus spicatus (Chulantree), this protein is Small ribosomal subunit protein uS14c.